A 359-amino-acid polypeptide reads, in one-letter code: 3-dehydroquinate synthase (359 aa).

Residues 70 to 75 (DGEQYK), 105 to 109 (GVIGD), 129 to 130 (TT), Lys142, Lys151, and 169 to 172 (FYKT) contribute to the NAD(+) site. Zn(2+) contacts are provided by Glu184, His247, and His264.

This sequence belongs to the sugar phosphate cyclases superfamily. Dehydroquinate synthase family. Requires Co(2+) as cofactor. The cofactor is Zn(2+). NAD(+) serves as cofactor.

The protein resides in the cytoplasm. The catalysed reaction is 7-phospho-2-dehydro-3-deoxy-D-arabino-heptonate = 3-dehydroquinate + phosphate. Its pathway is metabolic intermediate biosynthesis; chorismate biosynthesis; chorismate from D-erythrose 4-phosphate and phosphoenolpyruvate: step 2/7. Its function is as follows. Catalyzes the conversion of 3-deoxy-D-arabino-heptulosonate 7-phosphate (DAHP) to dehydroquinate (DHQ). This Francisella tularensis subsp. mediasiatica (strain FSC147) protein is 3-dehydroquinate synthase.